A 1844-amino-acid chain; its full sequence is ATPase family AAA domain-containing protein 5 (1844 aa).

S44 is modified (phosphoserine). K127 is covalently cross-linked (Glycyl lysine isopeptide (Lys-Gly) (interchain with G-Cter in SUMO2)). A compositionally biased stretch (polar residues) spans Q178–K199. The interval Q178–K204 is disordered. Phosphoserine is present on residues S219, S306, S311, S354, and S369. Positions K368–E384 are interaction with WDR48. Disordered regions lie at residues K477 to N499, E580 to L623, and K658 to I700. Polar residues-rich tracts occupy residues E580–K592 and R599–T608. S602, S614, and S621 each carry phosphoserine. Basic residues predominate over residues T664–N673. Positions G685–I700 are enriched in polar residues. S817 carries the phosphoserine modification. Basic and acidic residues-rich tracts occupy residues L987–K1032 and R1092–F1106. 2 disordered regions span residues L987–S1047 and R1092–D1118. A Phosphoserine modification is found at S1116. G1132–T1139 contributes to the ATP binding site. 2 disordered regions span residues K1203–K1235 and I1272–E1292. Over residues I1272–V1285 the composition is skewed to polar residues. The LXCXE motif motif lies at L1428 to E1432. Positions S1591–G1635 are disordered. A compositionally biased stretch (basic and acidic residues) spans E1602–K1624. The interaction with RAD51 and RFC5 stretch occupies residues P1630–K1719.

Belongs to the AAA ATPase family. Component of a heteropentameric replication factor ATAD5 RFC-like complex composed of one large subunit (ATAD5) and four small subunits (RFC2, RFC3, RFC4 and RFC5). Within the ATAD5 RFC-like complex, interacts with RFC2, RFC4 and RFC5. Within the ATAD5 RFC-like complex, interacts directly via-N terminal with RAD51; the interactions is enhanced under replication stress. Interacts with RB1 predominantly in G1 phase via its LXCXE motif. Interacts with RAD9A in growing cells. The interaction with RAD9A is reduced after exposure to DNA replication-inhibiting agents. Interacts with BRD4. Interacts with PCNA. Interacts with deubiquitinating enzyme USP1, and its associated factor, WDR48. ATR may stimulate the RAD9A dissociation.

The protein localises to the nucleus. Has an important role in DNA replication and in maintaining genome integrity during replication stress. Involved in a RAD9A-related damage checkpoint, a pathway that is important in determining whether DNA damage is compatible with cell survival or whether it requires cell elimination by apoptosis. Modulates the RAD9A interaction with BCL2 and thereby induces DNA damage-induced apoptosis. Promotes PCNA deubiquitination by recruiting the ubiquitin-specific protease 1 (USP1) and WDR48 thereby down-regulating the error-prone damage bypass pathway. As component of the ATAD5 RFC-like complex, regulates the function of the DNA polymerase processivity factor PCNA by unloading the ring-shaped PCNA homotrimer from DNA after replication during the S phase of the cell cycle. This seems to be dependent on its ATPase activity. Plays important roles in restarting stalled replication forks under replication stress, by unloading the PCNA homotrimer from DNA and recruiting RAD51 possibly through an ATR-dependent manner. Ultimately this enables replication fork regression, breakage, and eventual fork restart. Both the PCNA unloading activity and the interaction with WDR48 are required to efficiently recruit RAD51 to stalled replication forks. Promotes the generation of MUS81-mediated single-stranded DNA-associated breaks in response to replication stress, which is an alternative pathway to restart stalled/regressed replication forks. This is ATPase family AAA domain-containing protein 5 from Homo sapiens (Human).